The primary structure comprises 164 residues: Large ribosomal subunit protein uL15 (164 aa).

Disordered stretches follow at residues 1–49 (MTKL…SIAG) and 143–164 (EKAG…SAEA). A compositionally biased stretch (gly residues) spans 22-36 (RGPGSGKGKTAGRGV).

This sequence belongs to the universal ribosomal protein uL15 family. As to quaternary structure, part of the 50S ribosomal subunit.

Binds to the 23S rRNA. The sequence is that of Large ribosomal subunit protein uL15 from Phenylobacterium zucineum (strain HLK1).